A 789-amino-acid polypeptide reads, in one-letter code: DEAD-box ATP-dependent RNA helicase 28 (789 aa).

The interval 1–152 (MPSSFFFEDA…AEYKPEDATP (152 aa)) is disordered. Positions 13-66 (DELELIRNQEDSSEEDVKEGEAEEHEAGEDEDGEEEYEEEDDDEEEEDEKRKRD) form a coiled coil. Over residues 23 to 60 (DSSEEDVKEGEAEEHEAGEDEDGEEEYEEEDDDEEEED) the composition is skewed to acidic residues. Residues 83-99 (GEEHARRHTTSIDEKIS) show a composition bias toward basic and acidic residues. A coiled-coil region spans residues 110–135 (SINEEEEEEEEEEDASDAETDKQEEY). Residues 112-127 (NEEEEEEEEEEDASDA) are compositionally biased toward acidic residues. The short motif at 167-195 (DTFMELNLSRPLLRACETLGYKKPTPIQA) is the Q motif element. Positions 198 to 372 (IPLALTGRDL…KLSLNKPLRL (175 aa)) constitute a Helicase ATP-binding domain. Position 211-218 (211-218 (AITGSGKT)) interacts with ATP. The DEAD box signature appears at 320–323 (DEAD). Residues 402–546 (VLLSLCTRTF…SRVIPEQSIV (145 aa)) enclose the Helicase C-terminal domain. Coiled-coil stretches lie at residues 563-591 (ISAE…HRDE) and 628-677 (SADR…EDEE). Positions 611-789 (AQAEKDSAGN…FKSKARYKRR (179 aa)) are disordered. The span at 628–637 (SADRAEDLKM) shows a compositional bias: basic and acidic residues. Positions 638-656 (KEKRKREREKNLPRKKRRK) are enriched in basic residues. The span at 665–678 (EDNEGEEEEEDEEG) shows a compositional bias: acidic residues. Basic and acidic residues-rich tracts occupy residues 691 to 701 (KKQETDKKGLT), 718 to 734 (RAID…DKKQ), and 743 to 761 (PRGE…EKKQ). A compositionally biased stretch (basic residues) spans 772–789 (PRTKSKNSFKSKARYKRR).

This sequence belongs to the DEAD box helicase family. DDX27/DRS1 subfamily.

It carries out the reaction ATP + H2O = ADP + phosphate + H(+). The sequence is that of DEAD-box ATP-dependent RNA helicase 28 (RH28) from Arabidopsis thaliana (Mouse-ear cress).